The following is a 596-amino-acid chain: Cytochrome P450 monooxygenase FUM15 (596 aa).

The tract at residues 476 to 512 (DRWLSPKNGNREATEQSKFKIGNQKRDSTAAPEVTQE) is disordered. The span at 484–503 (GNREATEQSKFKIGNQKRDS) shows a compositional bias: basic and acidic residues. Heme is bound at residue Cys-536.

The protein belongs to the cytochrome P450 family. It depends on heme as a cofactor.

Its subcellular location is the endoplasmic reticulum. The protein operates within secondary metabolite biosynthesis. Its function is as follows. Cytochrome P450 monooxygenase; part of the gene cluster that mediates the biosynthesis of fumonisins B1 (FB1), B2 (FB2), B3 (FB3), and B4 (FB4), which are carcinogenic mycotoxins. Within the pathway, FUM15 may be responsible for the hydroxylations at positions C-14 and/or C-15. Also plays a role in self-protection from FB1 toxicity, probably through derivatization of FB1, and may contribute to ceramide biosynthesis. The biosynthesis starts with the FUM1-catalyzed carbon chain assembly from one molecule of acetyl-CoA, eight molecules of malonyl-CoA, and two molecules of methionine (in S-adenosyl form). The C18 polyketide chain is released from the enzyme by a nucleophilic attack of a carbanion, which is derived from R-carbon of alanine by decarboxylation, on the carbonyl carbon of polyketide acyl chain. This step is catalyzed by the pyridoxal 5'-phosphate-dependent aminoacyl transferase FUM8. The resultant 3-keto intermediate is then stereospecifically reduced to a 3-hydroxyl product by reductase FUM13. Subsequent oxidations at C-10 by the cytochrome P450 monooxygenase FUM2, C-14 and C-15 by FUM6, FUM12 or FUM15, tricarballylic esterification of the hydroxyl groups on C-14 and C-15 by acyltransferase FUM14, and C-5 hydroxylation by 2-keto-glutarate-dependent dioxygenase FUM3 furnish the biosynthesis of fumonisins. The tricarballylic moieties are most likely derived from the citric acid cycle, and their addition to the carbon backbone may involve FUM7, FUM10, FUM11 and FUM14. This Gibberella moniliformis (strain M3125 / FGSC 7600) (Maize ear and stalk rot fungus) protein is Cytochrome P450 monooxygenase FUM15.